The following is a 251-amino-acid chain: tRNA pseudouridine synthase A (251 aa).

Asp-52 (nucleophile) is an active-site residue. Residue Tyr-113 participates in substrate binding.

This sequence belongs to the tRNA pseudouridine synthase TruA family. In terms of assembly, homodimer.

It catalyses the reaction uridine(38/39/40) in tRNA = pseudouridine(38/39/40) in tRNA. In terms of biological role, formation of pseudouridine at positions 38, 39 and 40 in the anticodon stem and loop of transfer RNAs. The chain is tRNA pseudouridine synthase A from Brucella anthropi (strain ATCC 49188 / DSM 6882 / CCUG 24695 / JCM 21032 / LMG 3331 / NBRC 15819 / NCTC 12168 / Alc 37) (Ochrobactrum anthropi).